The sequence spans 469 residues: Ribulose bisphosphate carboxylase large chain (469 aa).

N6,N6,N6-trimethyllysine is present on K7. The substrate site is built by N116 and T166. The active-site Proton acceptor is K168. K170 serves as a coordination point for substrate. K194, D196, and E197 together coordinate Mg(2+). K194 carries the post-translational modification N6-carboxylysine. The active-site Proton acceptor is the H287. Residues R288, H320, and S372 each coordinate substrate.

Belongs to the RuBisCO large chain family. Type I subfamily. As to quaternary structure, heterohexadecamer of 8 large chains and 8 small chains; disulfide-linked. The disulfide link is formed within the large subunit homodimers. Mg(2+) serves as cofactor. The disulfide bond which can form in the large chain dimeric partners within the hexadecamer appears to be associated with oxidative stress and protein turnover.

It localises to the plastid. The protein localises to the chloroplast. It carries out the reaction 2 (2R)-3-phosphoglycerate + 2 H(+) = D-ribulose 1,5-bisphosphate + CO2 + H2O. It catalyses the reaction D-ribulose 1,5-bisphosphate + O2 = 2-phosphoglycolate + (2R)-3-phosphoglycerate + 2 H(+). In terms of biological role, ruBisCO catalyzes two reactions: the carboxylation of D-ribulose 1,5-bisphosphate, the primary event in carbon dioxide fixation, as well as the oxidative fragmentation of the pentose substrate in the photorespiration process. Both reactions occur simultaneously and in competition at the same active site. The chain is Ribulose bisphosphate carboxylase large chain from Pachira aquatica (Guiana chestnut).